A 290-amino-acid polypeptide reads, in one-letter code: Translin-associated protein X (290 aa).

A disordered region spans residues 1–31 (MNGKEGPGGFRKRKHDTFPHNQRREGKDASL). Over residues 16-28 (DTFPHNQRREGKD) the composition is skewed to basic and acidic residues. The tract at residues 73–208 (LLHRITSAPD…MRMCINSVGN (136 aa)) is interaction with C1D. The Mg(2+) site is built by E129 and E197. Residue K279 forms a Glycyl lysine isopeptide (Lys-Gly) (interchain with G-Cter in SUMO2) linkage.

The protein belongs to the translin family. In terms of assembly, ring-shaped heterooctamer of six TSN and two TSNAX subunits. Interacts with GOLGA3, TSNAXIP1, SUN1 and AKAP9. Interacts with the homodimeric form of C1D following gamma-radiation. Interacts with TSN and C1D in a mutually exclusive manner. Sumoylated with SUMO1. Detected in heart, brain, lung, liver, kidney and testis.

Its subcellular location is the cytoplasm. The protein resides in the perinuclear region. The protein localises to the golgi apparatus. It localises to the nucleus. Acts in combination with TSN as an endonuclease involved in the activation of the RNA-induced silencing complex (RISC). Possible role in spermatogenesis. This Mus musculus (Mouse) protein is Translin-associated protein X (Tsnax).